The chain runs to 1017 residues: uncharacterized protein (1017 aa).

A signal peptide (tat-type signal) is located at residues 1 to 34 (MGNLTMSRRTFVKTAAITGAAAAAFGASTHTALA). One can recognise a 4Fe-4S Mo/W bis-MGD-type domain in the interval 45–103 (DTVAVKTCCRGCGKMECGVKVIVQNGRAIRVEGDEGAFQSMGNCCTKSQSSIQAAYHPD). [4Fe-4S] cluster is bound by residues Cys-53, Cys-56, Cys-61, and Cys-89. The Electron donor/acceptor role is filled by Lys-91.

It belongs to the prokaryotic molybdopterin-containing oxidoreductase family. The cofactor is [4Fe-4S] cluster. Mo-bis(molybdopterin guanine dinucleotide) is required as a cofactor. In terms of processing, predicted to be exported by the Tat system. The position of the signal peptide cleavage has not been experimentally proven.

This is an uncharacterized protein from Eggerthella lenta (strain ATCC 25559 / DSM 2243 / CCUG 17323 / JCM 9979 / KCTC 3265 / NCTC 11813 / VPI 0255 / 1899 B) (Eubacterium lentum).